Reading from the N-terminus, the 156-residue chain is UPF0251 protein Sfum_2819 (156 aa).

This sequence belongs to the UPF0251 family.

The sequence is that of UPF0251 protein Sfum_2819 from Syntrophobacter fumaroxidans (strain DSM 10017 / MPOB).